A 527-amino-acid chain; its full sequence is uncharacterized protein (527 aa).

A PE domain is found at 1–93 (MSYMIAVPDM…AGAYASAEAT (93 aa)). Gly residues-rich tracts occupy residues 264-286 (IHGH…GVQG), 292-384 (GAAG…AGNG), and 472-515 (NGGD…GGSR). Disordered stretches follow at residues 264-384 (IHGH…AGNG) and 472-527 (NGGD…TPGQ).

The protein belongs to the mycobacterial PE family. PGRS subfamily.

This is an uncharacterized protein from Mycobacterium tuberculosis (strain CDC 1551 / Oshkosh).